The chain runs to 263 residues: uncharacterized protein (263 aa).

Residue 17–41 coordinates NAD(+); that stretch reads GGGRGLGAAIALAFAQAGADVLIAS. Substrate is bound at residue S147. Catalysis depends on Y160, which acts as the Proton acceptor. K164 serves as a coordination point for NAD(+).

The protein belongs to the short-chain dehydrogenases/reductases (SDR) family.

This is an uncharacterized protein from Mycobacterium tuberculosis (strain CDC 1551 / Oshkosh).